A 309-amino-acid polypeptide reads, in one-letter code: MPSLEDYRIPYPAAGPCQKRTVIYLPQQDSAVEQHHLRVQLIPGRHVRCEDGCFYQLTGTVSEETLQSWGYPYYVVTLDDIYPAQCSPSDPANPRTFVPLRESPMIPYNSKRPIVVYVPEDAEVRYRVWCSDVLQVQESQQELEAPAVSQSCPVPVRERQNNPEGHAHPVVVHSVESPEVSGHKDGDQPMKKSSKLKQSCSNSSRSLKHSASGSSPKNTPLFSRESVPPEHSLSAAQQRRRSNENSAIDETGGGASRKKRSDSTSSRKDDQDSGYEKKVKNLWNRARGNSSPKRSASPKKSGRDSRRNS.

The tract at residues 140–309 (QQELEAPAVS…KSGRDSRRNS (170 aa)) is disordered. The segment covering 156–167 (VRERQNNPEGHA) has biased composition (basic and acidic residues). A compositionally biased stretch (low complexity) spans 168–180 (HPVVVHSVESPEV). The span at 181-190 (SGHKDGDQPM) shows a compositional bias: basic and acidic residues. Positions 196–205 (LKQSCSNSSR) are enriched in low complexity. The span at 209–221 (HSASGSSPKNTPL) shows a compositional bias: polar residues. A compositionally biased stretch (basic and acidic residues) spans 261–279 (SDSTSSRKDDQDSGYEKKV). Over residues 290–299 (SSPKRSASPK) the composition is skewed to low complexity.

The protein belongs to the protease inhibitor I11 (ecotin) family.

The polypeptide is Ecotin-like protein 3 (Leishmania braziliensis).